We begin with the raw amino-acid sequence, 460 residues long: Dynactin subunit 4 (460 aa).

A2 bears the N-acetylalanine mark. A coiled-coil region spans residues 152-172 (QQLAQKEKVERDRKKLARRRN). Phosphoserine is present on S196. Residue K215 forms a Glycyl lysine isopeptide (Lys-Gly) (interchain with G-Cter in SUMO2) linkage. Phosphothreonine is present on T407.

It belongs to the dynactin subunit 4 family. Subunit of dynactin, a multiprotein complex part of a tripartite complex with dynein and a adapter, such as BICDL1, BICD2 or HOOK3. The dynactin complex is built around ACTR1A/ACTB filament and consists of an actin-related filament composed of a shoulder domain, a pointed end and a barbed end. Its length is defined by its flexible shoulder domain. The soulder is composed of 2 DCTN1 subunits, 4 DCTN2 and 2 DCTN3. The 4 DCNT2 (via N-terminus) bind the ACTR1A filament and act as molecular rulers to determine the length. The pointed end is important for binding dynein-dynactin cargo adapters. Consists of 4 subunits: ACTR10, DCNT4, DCTN5 and DCTN6. The barbed end is composed of a CAPZA1:CAPZB heterodimers, which binds ACTR1A/ACTB filament and dynactin and stabilizes dynactin. Interacts with ATP7B, but not ATP7A, in a copper-dependent manner. Interacts with ANK2; this interaction is required for localization at costameres. Interacts with N4BP2L1.

It localises to the cytoplasm. It is found in the cytoskeleton. The protein localises to the microtubule organizing center. The protein resides in the centrosome. Its subcellular location is the stress fiber. It localises to the cell cortex. It is found in the myofibril. The protein localises to the sarcomere. Its function is as follows. Part of the dynactin complex that activates the molecular motor dynein for ultra-processive transport along microtubules. This chain is Dynactin subunit 4, found in Homo sapiens (Human).